Reading from the N-terminus, the 440-residue chain is Chaperone SurA (440 aa).

The N-terminal stretch at 1 to 25 (MGTKLSSRSPFSLPFLTLLAGMAIA) is a signal peptide. PpiC domains lie at 182-283 (SDEY…KLVE) and 294-392 (IDQT…QVIE).

The protein resides in the periplasm. It carries out the reaction [protein]-peptidylproline (omega=180) = [protein]-peptidylproline (omega=0). Chaperone involved in the correct folding and assembly of outer membrane proteins. Recognizes specific patterns of aromatic residues and the orientation of their side chains, which are found more frequently in integral outer membrane proteins. May act in both early periplasmic and late outer membrane-associated steps of protein maturation. In Nitrosospira multiformis (strain ATCC 25196 / NCIMB 11849 / C 71), this protein is Chaperone SurA.